A 178-amino-acid chain; its full sequence is MKDKRRVKRDLPKINERIRFPNIRVISGDGEQLGIMTPAEALAIAEEEDLDLVLVSETAKPPVCRIMDYGKYKFEQEKRAREAKKKQHNADLKEVKMRYKIEEHDYQVRVNSAQRFLKSGDKVKATITFRGREIQHSNLAQKLLDRMAKDLEEVGEIQQRPKREGRNMMMILAPKKST.

This sequence belongs to the IF-3 family. In terms of assembly, monomer.

Its subcellular location is the cytoplasm. In terms of biological role, IF-3 binds to the 30S ribosomal subunit and shifts the equilibrium between 70S ribosomes and their 50S and 30S subunits in favor of the free subunits, thus enhancing the availability of 30S subunits on which protein synthesis initiation begins. This is Translation initiation factor IF-3 from Picosynechococcus sp. (strain ATCC 27264 / PCC 7002 / PR-6) (Agmenellum quadruplicatum).